Consider the following 154-residue polypeptide: Protein X (154 aa).

A mitochondrial targeting sequence region spans residues 68–117 (PCALRFTSARRMETTVNAHQVLPKVLYKRTLGLSAMSTTDLEAYFKDCLF).

Belongs to the orthohepadnavirus protein X family. As to quaternary structure, may form homodimer. May interact with host CEBPA, CFLAR, CREB1, DDB1, E4F1, HBXIP, HSPD1/HSP60, NFKBIA, POLR2E and SMAD4. Interacts with host SMC5-SMC6 complex and induces its degradation. Interacts with host TRPC4AP; leading to prevent ubiquitination of TRPC4AP. Interacts with host PLSCR1; this interaction promotes ubiquitination and degradation of HBx and impairs HBx-mediated cell proliferation. A fraction may be phosphorylated in insect cells and HepG2 cells, a human hepatoblastoma cell line. Phosphorylated in vitro by host protein kinase C or mitogen-activated protein kinase. N-acetylated in insect cells.

It is found in the host cytoplasm. The protein localises to the host nucleus. The protein resides in the host mitochondrion. Its function is as follows. Multifunctional protein that plays a role in silencing host antiviral defenses and promoting viral transcription. Does not seem to be essential for HBV infection. May be directly involved in development of cirrhosis and liver cancer (hepatocellular carcinoma). Most of cytosolic activities involve modulation of cytosolic calcium. The effect on apoptosis is controversial depending on the cell types in which the studies have been conducted. May induce apoptosis by localizing in mitochondria and causing loss of mitochondrial membrane potential. May also modulate apoptosis by binding host CFLAR, a key regulator of the death-inducing signaling complex (DISC). Promotes viral transcription by using the host E3 ubiquitin ligase DDB1 to target the SMC5-SMC6 complex to proteasomal degradation. This host complex would otherwise bind to viral episomal DNA, and prevents its transcription. Moderately stimulates transcription of many different viral and cellular transcription elements. Promoters and enhancers stimulated by HBx contain DNA binding sites for NF-kappa-B, AP-1, AP-2, c-EBP, ATF/CREB, or the calcium-activated factor NF-AT. The protein is Protein X of Homo sapiens (Human).